The primary structure comprises 271 residues: Mannosyl-3-phosphoglycerate phosphatase (271 aa).

Catalysis depends on D13, which acts as the Nucleophile. 3 residues coordinate Mg(2+): D13, D15, and D214.

Belongs to the HAD-like hydrolase superfamily. MPGP family. The cofactor is Mg(2+).

The protein resides in the cytoplasm. It carries out the reaction 2-O-(alpha-D-mannosyl)-3-phosphoglycerate + H2O = (2R)-2-O-(alpha-D-mannosyl)-glycerate + phosphate. This chain is Mannosyl-3-phosphoglycerate phosphatase, found in Escherichia coli O139:H28 (strain E24377A / ETEC).